The chain runs to 1155 residues: DNA-directed RNA polymerase subunit beta (1155 aa).

It belongs to the RNA polymerase beta chain family. As to quaternary structure, the RNAP catalytic core consists of 2 alpha, 1 beta, 1 beta' and 1 omega subunit. When a sigma factor is associated with the core the holoenzyme is formed, which can initiate transcription.

The enzyme catalyses RNA(n) + a ribonucleoside 5'-triphosphate = RNA(n+1) + diphosphate. Its function is as follows. DNA-dependent RNA polymerase catalyzes the transcription of DNA into RNA using the four ribonucleoside triphosphates as substrates. This chain is DNA-directed RNA polymerase subunit beta, found in Borreliella burgdorferi (strain ZS7) (Borrelia burgdorferi).